Reading from the N-terminus, the 797-residue chain is Outer membrane protein assembly factor BamA (797 aa).

The first 19 residues, 1–19 (MKKLLIASLLFGTTTTVFA), serve as a signal peptide directing secretion. POTRA domains are found at residues 22–89 (FVAK…VVAK), 90–170 (SIIS…INED), 173–259 (AKLA…VNEG), 262–341 (YDLR…VDAG), and 344–418 (LTVR…VKER).

This sequence belongs to the BamA family. Part of the Bam complex.

It localises to the cell outer membrane. In terms of biological role, part of the outer membrane protein assembly complex, which is involved in assembly and insertion of beta-barrel proteins into the outer membrane. The chain is Outer membrane protein assembly factor BamA from Haemophilus influenzae.